The chain runs to 325 residues: NADH-quinone oxidoreductase subunit H (325 aa).

The next 8 helical transmembrane spans lie at 11-31, 81-101, 114-134, 149-169, 186-206, 237-257, 265-285, and 304-324; these read VLIAVLKAVVILVVVVVCGAL, MIFTLAPVIGFVSLLLAFAIV, IGILFFMMMAGLAVYAVLFAG, ASAQTLSYEVFIGLSFMGVVA, MWNVIPQFFGFLTFAIAGVAV, FFVGEYIGIVTVSALIVTMFF, LPPFVWFALKTAFFMVMFILI, and ICLPLTLLNLLATAAVILYNA.

Belongs to the complex I subunit 1 family. As to quaternary structure, NDH-1 is composed of 13 different subunits. Subunits NuoA, H, J, K, L, M, N constitute the membrane sector of the complex.

The protein localises to the cell inner membrane. It carries out the reaction a quinone + NADH + 5 H(+)(in) = a quinol + NAD(+) + 4 H(+)(out). In terms of biological role, NDH-1 shuttles electrons from NADH, via FMN and iron-sulfur (Fe-S) centers, to quinones in the respiratory chain. The immediate electron acceptor for the enzyme in this species is believed to be ubiquinone. Couples the redox reaction to proton translocation (for every two electrons transferred, four hydrogen ions are translocated across the cytoplasmic membrane), and thus conserves the redox energy in a proton gradient. This subunit may bind ubiquinone. The sequence is that of NADH-quinone oxidoreductase subunit H from Photorhabdus laumondii subsp. laumondii (strain DSM 15139 / CIP 105565 / TT01) (Photorhabdus luminescens subsp. laumondii).